The chain runs to 153 residues: NADPH-dependent 7-cyano-7-deazaguanine reductase (153 aa).

The interval 1–22 (MTDNRYDNLGQLGTSTPLPDNP) is disordered. C51 functions as the Thioimide intermediate in the catalytic mechanism. D58 (proton donor) is an active-site residue. Substrate-binding positions include 73 to 75 (VES) and 92 to 93 (HE).

Belongs to the GTP cyclohydrolase I family. QueF type 1 subfamily.

It localises to the cytoplasm. The enzyme catalyses 7-aminomethyl-7-carbaguanine + 2 NADP(+) = 7-cyano-7-deazaguanine + 2 NADPH + 3 H(+). The protein operates within tRNA modification; tRNA-queuosine biosynthesis. In terms of biological role, catalyzes the NADPH-dependent reduction of 7-cyano-7-deazaguanine (preQ0) to 7-aminomethyl-7-deazaguanine (preQ1). The polypeptide is NADPH-dependent 7-cyano-7-deazaguanine reductase (Maricaulis maris (strain MCS10) (Caulobacter maris)).